Consider the following 54-residue polypeptide: Large ribosomal subunit protein bL33B (54 aa).

Belongs to the bacterial ribosomal protein bL33 family.

This Saccharopolyspora erythraea (strain ATCC 11635 / DSM 40517 / JCM 4748 / NBRC 13426 / NCIMB 8594 / NRRL 2338) protein is Large ribosomal subunit protein bL33B.